Reading from the N-terminus, the 256-residue chain is MEIIPAIDLLNGKCVRLNQGNYNEVTKFNSDPVKQAQIWESKGAKRLHLVDLDGAKTGEPINDLTIKEIKKSITIPIQLGGGIRSIDRAKELFDIGIDRIILGTIAIEKPELVKDLSKEYPKRVAVGIDAKEGMVATRGWLKQSKISSLDLAKQLNDLDLAAIISTDIATDGTLKGPNVQALREIAEISINPVIASGGIGSIADLISLADFADEGIEGIIVGRALYDGSIDLKEAILTLKNLLLQDAFNEKDKFLV.

Asp8 acts as the Proton acceptor in catalysis. Asp129 functions as the Proton donor in the catalytic mechanism.

The protein belongs to the HisA/HisF family.

The protein resides in the cytoplasm. The catalysed reaction is 1-(5-phospho-beta-D-ribosyl)-5-[(5-phospho-beta-D-ribosylamino)methylideneamino]imidazole-4-carboxamide = 5-[(5-phospho-1-deoxy-D-ribulos-1-ylimino)methylamino]-1-(5-phospho-beta-D-ribosyl)imidazole-4-carboxamide. It functions in the pathway amino-acid biosynthesis; L-histidine biosynthesis; L-histidine from 5-phospho-alpha-D-ribose 1-diphosphate: step 4/9. The chain is 1-(5-phosphoribosyl)-5-[(5-phosphoribosylamino)methylideneamino] imidazole-4-carboxamide isomerase from Prochlorococcus marinus (strain NATL1A).